We begin with the raw amino-acid sequence, 670 residues long: DNA ligase (670 aa).

NAD(+) is bound by residues 32 to 36, 81 to 82, and glutamate 113; these read DAEYD and SL. Lysine 115 (N6-AMP-lysine intermediate) is an active-site residue. NAD(+) contacts are provided by arginine 136, glutamate 173, lysine 290, and lysine 314. 4 residues coordinate Zn(2+): cysteine 408, cysteine 411, cysteine 426, and cysteine 432. In terms of domain architecture, BRCT spans 592–670; the sequence is ESDSPFAGKT…EAEMIRLLGE (79 aa).

This sequence belongs to the NAD-dependent DNA ligase family. LigA subfamily. The cofactor is Mg(2+). Requires Mn(2+) as cofactor.

It catalyses the reaction NAD(+) + (deoxyribonucleotide)n-3'-hydroxyl + 5'-phospho-(deoxyribonucleotide)m = (deoxyribonucleotide)n+m + AMP + beta-nicotinamide D-nucleotide.. In terms of biological role, DNA ligase that catalyzes the formation of phosphodiester linkages between 5'-phosphoryl and 3'-hydroxyl groups in double-stranded DNA using NAD as a coenzyme and as the energy source for the reaction. It is essential for DNA replication and repair of damaged DNA. In Yersinia pestis bv. Antiqua (strain Antiqua), this protein is DNA ligase.